The primary structure comprises 73 residues: U-scoloptoxin(22)-Cw1a (73 aa).

A signal peptide spans 1-24 (MRRFVFLAFVLVLFVIANLDSSSA).

This sequence belongs to the scoloptoxin-22 family. In terms of processing, contains 1 disulfide bond. In terms of tissue distribution, expressed by the venom gland.

The protein localises to the secreted. This is U-scoloptoxin(22)-Cw1a from Cormocephalus westwoodi (Westwood's green centipede).